Consider the following 756-residue polypeptide: Polyribonucleotide nucleotidyltransferase (756 aa).

Mg(2+) is bound by residues Asp492 and Asp498. Residues 559–618 form the KH domain; the sequence is PQHAEVFVNPDVIRIIIGPGGKNIKAITAATGASIDIEDSGKVSIFAPTYEAMEMAREMV. The region spanning 628–702 is the S1 motif domain; the sequence is GKNYVGKVRK…SRKAVLLEEQ (75 aa). The segment at 703-756 is disordered; it reads GVEWNPEDTARPSGPPRDRGDRGDRGGRGDRGGDRRGGDRGGRGGDRGRGGDRR. Residues 718–756 are compositionally biased toward basic and acidic residues; it reads PRDRGDRGDRGGRGDRGGDRRGGDRGGRGGDRGRGGDRR.

This sequence belongs to the polyribonucleotide nucleotidyltransferase family. Requires Mg(2+) as cofactor.

The protein resides in the cytoplasm. It carries out the reaction RNA(n+1) + phosphate = RNA(n) + a ribonucleoside 5'-diphosphate. In terms of biological role, involved in mRNA degradation. Catalyzes the phosphorolysis of single-stranded polyribonucleotides processively in the 3'- to 5'-direction. In Nitratidesulfovibrio vulgaris (strain DSM 19637 / Miyazaki F) (Desulfovibrio vulgaris), this protein is Polyribonucleotide nucleotidyltransferase.